Consider the following 468-residue polypeptide: MDNLKVLFEENLFSDLQLIVEDSNESIVLNVHRNILYFSCDFFKKLLIGQFSETNDKSIKIIVHNAKITSCVIKNFYGIDDKLPEYPDWMYYLETYRCYDYFGMKIPVDKLLELTVPSEGFELLLQIVDLLDYCDELGHLIIRNLPLDYDINDLSKDFVTDLQRLSNEYQIICTKHHTIKIFNNKLYKPIKTIHHSENITSLCYDNNNKRIIYGDLKGTIYAYDFFSNKIIFNLQNIQTNKTLPNNVIHLAIINDKLISVYFDGKITVRNSLDGTLCYVIKLIENPFLFKVCPHTNCIFHFNTHGFTNVWSIDTGNLIHKLSQFTNTMFNTLKNDLIIFWRENNLILCNYPSMDEIGTLCKEYSFPPLVLLNKQHILVGCHNGLMDIWNLKKLTLVKSTQLFDVPIISMTYSPNGDQLIVANCDREVRILNSDNYEIIYTKNINKDNNNKLLTISLHDAEKIEKLNIL.

The 72-residue stretch at 14 to 85 (SDLQLIVEDS…FYGIDDKLPE (72 aa)) folds into the BTB domain. WD repeat units lie at residues 194–233 (HHSE…IIFN), 354–398 (DEIG…LVKS), and 401–440 (LFDV…IIYT).

This sequence belongs to the mimivirus BTB/WD family.

This chain is Putative BTB/POZ domain and WD-repeat protein R154, found in Acanthamoeba polyphaga (Amoeba).